Reading from the N-terminus, the 335-residue chain is Ferrochelatase (335 aa).

2 residues coordinate Fe cation: His-207 and Glu-288.

Belongs to the ferrochelatase family.

It is found in the cytoplasm. The catalysed reaction is heme b + 2 H(+) = protoporphyrin IX + Fe(2+). Its pathway is porphyrin-containing compound metabolism; protoheme biosynthesis; protoheme from protoporphyrin-IX: step 1/1. Catalyzes the ferrous insertion into protoporphyrin IX. In Helicobacter pylori (strain G27), this protein is Ferrochelatase.